The sequence spans 166 residues: Nucleotide-binding protein CV_2047 (166 aa).

It belongs to the YajQ family.

Its function is as follows. Nucleotide-binding protein. This Chromobacterium violaceum (strain ATCC 12472 / DSM 30191 / JCM 1249 / CCUG 213 / NBRC 12614 / NCIMB 9131 / NCTC 9757 / MK) protein is Nucleotide-binding protein CV_2047.